We begin with the raw amino-acid sequence, 552 residues long: 3-hydroxy-3-methylglutaryl-coenzyme A reductase 1 (552 aa).

2 stretches are compositionally biased toward low complexity: residues Gln-79 to Gln-99 and Gln-112 to Gln-122. The interval Gln-79 to Pro-138 is disordered. Residues Thr-123–Lys-132 are compositionally biased toward polar residues. Glu-237 acts as the Charge relay system in catalysis. N-linked (GlcNAc...) asparagine glycosylation is present at Asn-288. Lys-369 (charge relay system) is an active-site residue. Residue Asn-375 is glycosylated (N-linked (GlcNAc...) asparagine). Asp-445 acts as the Charge relay system in catalysis. The Proton donor role is filled by His-543.

It belongs to the HMG-CoA reductase family.

The protein localises to the endoplasmic reticulum membrane. It carries out the reaction (R)-mevalonate + 2 NADP(+) + CoA = (3S)-3-hydroxy-3-methylglutaryl-CoA + 2 NADPH + 2 H(+). It participates in metabolic intermediate biosynthesis; (R)-mevalonate biosynthesis; (R)-mevalonate from acetyl-CoA: step 3/3. Functionally, this transmembrane glycoprotein is involved in the control of cholesterol biosynthesis. It is the rate-limiting enzyme of the sterol biosynthesis. The polypeptide is 3-hydroxy-3-methylglutaryl-coenzyme A reductase 1 (hmgA) (Dictyostelium discoideum (Social amoeba)).